A 1037-amino-acid polypeptide reads, in one-letter code: Importin-8 (1037 aa).

The Importin N-terminal domain occupies 22–102 (AENELNQSYK…RDNIVEGIIR (81 aa)). Over residues 886-895 (DRSKAEKADM) the composition is skewed to basic and acidic residues. Residues 886–934 (DRSKAEKADMEENEEISSDEEETNVTAQAMQSNNGRGEDEEEEDDDWDE) form a disordered region. Over residues 896–908 (EENEEISSDEEET) the composition is skewed to acidic residues. Phosphoserine occurs at positions 902 and 903. Positions 909 to 920 (NVTAQAMQSNNG) are enriched in polar residues. The span at 923–934 (EDEEEEDDDWDE) shows a compositional bias: acidic residues.

Belongs to the importin beta family. As to quaternary structure, forms a heterodimer with KPNB1. Interacts with SRP19. Interacts with RPL23A. Binds directly to nuclear pore complexes. Interacts with LRPPRC; the interaction occurs when LRPPRC is in its RNA-free form and promotes import of LRPPRC to the nucleus to allow for EIF4E-mediated export of mRNAS from the nucleus to the cytoplasm.

The protein resides in the cytoplasm. Its subcellular location is the nucleus. Involved in nuclear protein import, either by acting as autonomous nuclear transport receptor or as an adapter-like protein in association with the importin-beta subunit KPNB1. Acting autonomously, may serve as receptor for nuclear localization signals (NLS) and promote translocation of import substrates through the nuclear pore complex (NPC) by an energy requiring, Ran-dependent mechanism. At the nucleoplasmic side of the NPC, Ran binds to importin, the importin/substrate complex dissociates and importin is re-exported from the nucleus to the cytoplasm where GTP hydrolysis releases Ran. The directionality of nuclear import is thought to be conferred by an asymmetric distribution of the GTP- and GDP-bound forms of Ran between the cytoplasm and nucleus. In vitro mediates the nuclear import of the signal recognition particle protein SRP19. May also be involved in cytoplasm-to-nucleus shuttling of a broad spectrum of other cargos, including Argonaute-microRNAs complexes, the JUN protein, RELA/NF-kappa-B p65 subunit, the translation initiation factor EIF4E and a set of receptor-activated mothers against decapentaplegic homolog (SMAD) transcription factors that play a critical role downstream of the large family of transforming growth factor beta and bone morphogenetic protein (BMP) cytokines. The sequence is that of Importin-8 (IPO8) from Homo sapiens (Human).